Consider the following 420-residue polypeptide: Serine hydroxymethyltransferase (420 aa).

Residues L117 and 121-123 each bind (6S)-5,6,7,8-tetrahydrofolate; that span reads GHL. N6-(pyridoxal phosphate)lysine is present on K226.

This sequence belongs to the SHMT family. In terms of assembly, homodimer. The cofactor is pyridoxal 5'-phosphate.

Its subcellular location is the cytoplasm. The catalysed reaction is (6R)-5,10-methylene-5,6,7,8-tetrahydrofolate + glycine + H2O = (6S)-5,6,7,8-tetrahydrofolate + L-serine. Its pathway is one-carbon metabolism; tetrahydrofolate interconversion. It participates in amino-acid biosynthesis; glycine biosynthesis; glycine from L-serine: step 1/1. Functionally, catalyzes the reversible interconversion of serine and glycine with tetrahydrofolate (THF) serving as the one-carbon carrier. This reaction serves as the major source of one-carbon groups required for the biosynthesis of purines, thymidylate, methionine, and other important biomolecules. Also exhibits THF-independent aldolase activity toward beta-hydroxyamino acids, producing glycine and aldehydes, via a retro-aldol mechanism. This chain is Serine hydroxymethyltransferase, found in Rhodopirellula baltica (strain DSM 10527 / NCIMB 13988 / SH1).